The sequence spans 96 residues: Large ribosomal subunit protein uL23 (96 aa).

It belongs to the universal ribosomal protein uL23 family. In terms of assembly, part of the 50S ribosomal subunit. Contacts protein L29, and trigger factor when it is bound to the ribosome.

Its function is as follows. One of the early assembly proteins it binds 23S rRNA. One of the proteins that surrounds the polypeptide exit tunnel on the outside of the ribosome. Forms the main docking site for trigger factor binding to the ribosome. This Bacillus mycoides (strain KBAB4) (Bacillus weihenstephanensis) protein is Large ribosomal subunit protein uL23.